The sequence spans 477 residues: UDP-N-acetylmuramate--L-alanine ligase (477 aa).

Gly-117–Thr-123 serves as a coordination point for ATP.

This sequence belongs to the MurCDEF family.

It localises to the cytoplasm. The catalysed reaction is UDP-N-acetyl-alpha-D-muramate + L-alanine + ATP = UDP-N-acetyl-alpha-D-muramoyl-L-alanine + ADP + phosphate + H(+). It participates in cell wall biogenesis; peptidoglycan biosynthesis. Functionally, cell wall formation. The protein is UDP-N-acetylmuramate--L-alanine ligase of Phenylobacterium zucineum (strain HLK1).